A 442-amino-acid polypeptide reads, in one-letter code: UDP-N-acetylmuramoylalanine--D-glutamate ligase (442 aa).

Residue G109 to T115 coordinates ATP.

It belongs to the MurCDEF family.

The protein resides in the cytoplasm. It carries out the reaction UDP-N-acetyl-alpha-D-muramoyl-L-alanine + D-glutamate + ATP = UDP-N-acetyl-alpha-D-muramoyl-L-alanyl-D-glutamate + ADP + phosphate + H(+). The protein operates within cell wall biogenesis; peptidoglycan biosynthesis. Cell wall formation. Catalyzes the addition of glutamate to the nucleotide precursor UDP-N-acetylmuramoyl-L-alanine (UMA). The protein is UDP-N-acetylmuramoylalanine--D-glutamate ligase of Solibacter usitatus (strain Ellin6076).